Here is a 470-residue protein sequence, read N- to C-terminus: Proton-coupled amino acid transporter 3 (470 aa).

Over 1–46 (MSLLGRDYNSELNSLDNGPQSPSESSSSITSENVHPAGEAGLSMMQ) the chain is Cytoplasmic. Over residues 10-20 (SELNSLDNGPQ) the composition is skewed to polar residues. The tract at residues 10-33 (SELNSLDNGPQSPSESSSSITSEN) is disordered. Residues 21-31 (SPSESSSSITS) show a composition bias toward low complexity. A helical transmembrane segment spans residues 47-67 (TLIHLLKCNIGTGLLGLPLAI). Residues 68–71 (KNAG) lie on the Extracellular side of the membrane. The chain crosses the membrane as a helical span at residues 72–92 (LLVGPVSLLAIGVLTVHCMVI). At 93–137 (LLNCAQHLSQRLQKTFVNYGEATMYGLETCPNTWLRAHAVWGRYT) the chain is on the cytoplasmic side. A helical transmembrane segment spans residues 138–158 (VSFLLVITQLGFCSVYFMFMA). The Extracellular portion of the chain corresponds to 159–185 (DNLQQMVEKAHVTSNICQPREILTLTP). The helical transmembrane segment at 186-206 (ILDIRFYMLIILPFLILLVFI) threads the bilayer. Residues 207–210 (QNLK) lie on the Cytoplasmic side of the membrane. A helical transmembrane segment spans residues 211–231 (VLSVFSTLANITTLGSMALIF). The Extracellular segment spans residues 232–252 (EYIMEGIPYPSNLPLMANWKT). The chain crosses the membrane as a helical span at residues 253–273 (FLLFFGTAIFTFEGVGMVLPL). Residues 274–284 (KNQMKHPQQFS) lie on the Cytoplasmic side of the membrane. The helical transmembrane segment at 285 to 305 (FVLYLGMSIVIILYILLGTLG) threads the bilayer. At 306–337 (YMKFGSDTQASITLNLPNCWLYQSVKLMYSIG) the chain is on the extracellular side. The helical transmembrane segment at 338 to 358 (IFFTYALQFHVPAEIIIPFAI) threads the bilayer. Over 359–367 (SQVSESWAL) the chain is Cytoplasmic. The chain crosses the membrane as a helical span at residues 368 to 388 (FVDLSVRSALVCLTCVSAILI). Over 389 to 392 (PRLD) the chain is Extracellular. Residues 393–413 (LVISLVGSVSSSALALIIPAL) traverse the membrane as a helical segment. The Cytoplasmic segment spans residues 414–425 (LEIVIFYSEDMS). A helical membrane pass occupies residues 426–446 (CVTIAKDIMISIVGLLGCIFG). At 447–470 (TYQALYELPQPISHSMANSTGVHA) the chain is on the extracellular side.

Belongs to the amino acid/polyamine transporter 2 family. As to expression, specifically expressed in testis.

It is found in the membrane. This Homo sapiens (Human) protein is Proton-coupled amino acid transporter 3 (SLC36A3).